Here is a 483-residue protein sequence, read N- to C-terminus: Probable gamma-aminobutyrate transaminase 4 (483 aa).

Pyridoxal 5'-phosphate is bound at residue 138 to 139 (GS). A substrate-binding site is contributed by Tyr171. Pyridoxal 5'-phosphate is bound at residue Asp278. Lys307 lines the substrate pocket. An N6-(pyridoxal phosphate)lysine modification is found at Lys307.

Belongs to the class-III pyridoxal-phosphate-dependent aminotransferase family. Not detected in roots, stems, flowers or leaves of healthy plants.

Its subcellular location is the cytoplasm. The enzyme catalyses 4-aminobutanoate + pyruvate = succinate semialdehyde + L-alanine. It catalyses the reaction 4-aminobutanoate + glyoxylate = succinate semialdehyde + glycine. Transaminase that degrades gamma-amino butyric acid (GABA). The sequence is that of Probable gamma-aminobutyrate transaminase 4 (GABA-T) from Oryza sativa subsp. japonica (Rice).